Consider the following 670-residue polypeptide: Transketolase, chromosomal (670 aa).

His32 is a substrate binding site. Thiamine diphosphate is bound by residues His72 and 120 to 122 (GPL). Asp161 lines the Mg(2+) pocket. 2 residues coordinate thiamine diphosphate: Gly162 and Asn191. Mg(2+)-binding residues include Asn191 and Ile193. His267, Arg364, and Ser391 together coordinate substrate. His267 lines the thiamine diphosphate pocket. Glu417 functions as the Proton donor in the catalytic mechanism. Residue Phe443 coordinates thiamine diphosphate. His467, Asp475, and Arg526 together coordinate substrate.

It belongs to the transketolase family. In terms of assembly, homodimer. The cofactor is Mg(2+). Ca(2+) is required as a cofactor. Mn(2+) serves as cofactor. It depends on Co(2+) as a cofactor. Requires thiamine diphosphate as cofactor.

It catalyses the reaction D-sedoheptulose 7-phosphate + D-glyceraldehyde 3-phosphate = aldehydo-D-ribose 5-phosphate + D-xylulose 5-phosphate. Its pathway is carbohydrate biosynthesis; Calvin cycle. Its function is as follows. Catalyzes the transfer of a two-carbon ketol group from a ketose donor to an aldose acceptor, via a covalent intermediate with the cofactor thiamine pyrophosphate. The sequence is that of Transketolase, chromosomal (cbbTC) from Cupriavidus necator (strain ATCC 17699 / DSM 428 / KCTC 22496 / NCIMB 10442 / H16 / Stanier 337) (Ralstonia eutropha).